Reading from the N-terminus, the 579-residue chain is Ribonucleoside-diphosphate reductase small chain (579 aa).

Fe cation contacts are provided by D130, E160, and H163. Residue Y167 is part of the active site. E225, E258, and H261 together coordinate Fe cation. Residues 435–579 (DMTWTLKDVH…VSVFVDQFYR (145 aa)) enclose the Fido domain.

This sequence belongs to the ribonucleoside diphosphate reductase small chain family. As to quaternary structure, heterotetramer composed of a homodimer of the large subunit (R1) and a homodimer of the small subunit (R2). Larger multisubunit protein complex are also active, composed of (R1)n(R2)n. Fe cation serves as cofactor.

It carries out the reaction a 2'-deoxyribonucleoside 5'-diphosphate + [thioredoxin]-disulfide + H2O = a ribonucleoside 5'-diphosphate + [thioredoxin]-dithiol. Functionally, ribonucleoside-diphosphate reductase holoenzyme provides the precursors necessary for viral DNA synthesis. Allows virus growth in non-dividing cells. Catalyzes the biosynthesis of deoxyribonucleotides from the corresponding ribonucleotides. This chain is Ribonucleoside-diphosphate reductase small chain, found in Magallana gigas (Pacific oyster).